Here is a 397-residue protein sequence, read N- to C-terminus: uncharacterized protein (397 aa).

The next 10 membrane-spanning stretches (helical) occupy residues 2–24 (LNLL…PGIH), 44–66 (YIPF…SAFL), 92–114 (AIVL…SLFL), 124–143 (AFYC…FILY), 150–169 (SVWE…AVLY), 173–195 (AFNI…INNL), 255–277 (FIVS…VIFI), 297–319 (INTA…LNLS), 331–350 (FKFL…IIGS), and 354–373 (YLIY…LLAV).

It localises to the cell membrane. This is an uncharacterized protein from Methanocaldococcus jannaschii (strain ATCC 43067 / DSM 2661 / JAL-1 / JCM 10045 / NBRC 100440) (Methanococcus jannaschii).